The chain runs to 428 residues: Glutamate-1-semialdehyde 2,1-aminomutase (428 aa).

K267 is subject to N6-(pyridoxal phosphate)lysine.

Belongs to the class-III pyridoxal-phosphate-dependent aminotransferase family. HemL subfamily. In terms of assembly, homodimer. Pyridoxal 5'-phosphate serves as cofactor.

Its subcellular location is the cytoplasm. The enzyme catalyses (S)-4-amino-5-oxopentanoate = 5-aminolevulinate. The protein operates within porphyrin-containing compound metabolism; protoporphyrin-IX biosynthesis; 5-aminolevulinate from L-glutamyl-tRNA(Glu): step 2/2. In Sulfurihydrogenibium sp. (strain YO3AOP1), this protein is Glutamate-1-semialdehyde 2,1-aminomutase.